Here is a 396-residue protein sequence, read N- to C-terminus: Tyrosine--tRNA ligase (396 aa).

Residues 42-51 (PTAPDIHLGH) carry the 'HIGH' region motif. Positions 226 to 230 (KMSKS) match the 'KMSKS' region motif. K229 contacts ATP. The S4 RNA-binding domain maps to 334-395 (LPIANLLKEA…GKRKFAKIII (62 aa)).

It belongs to the class-I aminoacyl-tRNA synthetase family. TyrS type 2 subfamily. Homodimer.

The protein resides in the cytoplasm. It catalyses the reaction tRNA(Tyr) + L-tyrosine + ATP = L-tyrosyl-tRNA(Tyr) + AMP + diphosphate + H(+). In terms of biological role, catalyzes the attachment of tyrosine to tRNA(Tyr) in a two-step reaction: tyrosine is first activated by ATP to form Tyr-AMP and then transferred to the acceptor end of tRNA(Tyr). In Francisella tularensis subsp. tularensis (strain SCHU S4 / Schu 4), this protein is Tyrosine--tRNA ligase.